The chain runs to 283 residues: Putative pyruvate, phosphate dikinase regulatory protein (283 aa).

156–163 (GLSRAGKT) contributes to the ADP binding site.

This sequence belongs to the pyruvate, phosphate/water dikinase regulatory protein family. PDRP subfamily.

The enzyme catalyses N(tele)-phospho-L-histidyl/L-threonyl-[pyruvate, phosphate dikinase] + ADP = N(tele)-phospho-L-histidyl/O-phospho-L-threonyl-[pyruvate, phosphate dikinase] + AMP + H(+). It carries out the reaction N(tele)-phospho-L-histidyl/O-phospho-L-threonyl-[pyruvate, phosphate dikinase] + phosphate + H(+) = N(tele)-phospho-L-histidyl/L-threonyl-[pyruvate, phosphate dikinase] + diphosphate. Functionally, bifunctional serine/threonine kinase and phosphorylase involved in the regulation of the pyruvate, phosphate dikinase (PPDK) by catalyzing its phosphorylation/dephosphorylation. The chain is Putative pyruvate, phosphate dikinase regulatory protein from Desulfotalea psychrophila (strain LSv54 / DSM 12343).